Consider the following 375-residue polypeptide: Peptidyl-prolyl cis-trans isomerase D (375 aa).

Residues 7-169 (YFDITIANEP…QAVTISSAGV (163 aa)) enclose the PPIase cyclophilin-type domain. TPR repeat units lie at residues 217–250 (AGKL…LDVH), 270–307 (LPLL…PNLS), and 312–345 (GKAL…VPGD).

The protein belongs to the cyclophilin-type PPIase family. PPIase D subfamily.

It is found in the cytoplasm. It carries out the reaction [protein]-peptidylproline (omega=180) = [protein]-peptidylproline (omega=0). Its function is as follows. PPIases accelerate the folding of proteins. It catalyzes the cis-trans isomerization of proline imidic peptide bonds in oligopeptides. This is Peptidyl-prolyl cis-trans isomerase D (CPR6) from Cryptococcus neoformans var. neoformans serotype D (strain JEC21 / ATCC MYA-565) (Filobasidiella neoformans).